Consider the following 145-residue polypeptide: uncharacterized protein (145 aa).

A disordered region spans residues leucine 62–glycine 145. The segment covering alanine 84–proline 95 has biased composition (pro residues).

This is an uncharacterized protein from Homo sapiens (Human).